A 183-amino-acid chain; its full sequence is Large ribosomal subunit protein eL18 (183 aa).

Residues 146 to 183 (HFGPAPGVPHSHTKPYVRSKGRKFEKARGRRKSRGFRV) form a disordered region. Composition is skewed to basic residues over residues 156-166 (SHTKPYVRSKG) and 173-183 (RGRRKSRGFRV).

Belongs to the eukaryotic ribosomal protein eL18 family.

This is Large ribosomal subunit protein eL18 (RPL18) from Cicer arietinum (Chickpea).